Here is a 204-residue protein sequence, read N- to C-terminus: Somatotropin (204 aa).

The signal sequence occupies residues 1 to 17 (MDRVVLMLSVLSLGVSS). Gln18 carries the post-translational modification Pyrrolidone carboxylic acid. His36 is a binding site for Zn(2+). Cys69 and Cys177 are joined by a disulfide. A Zn(2+)-binding site is contributed by Glu186. An intrachain disulfide couples Cys194 to Cys202.

It belongs to the somatotropin/prolactin family.

It localises to the secreted. Its function is as follows. Growth hormone plays an important role in growth control and is involved in the regulation of several anabolic processes. Implicated as an osmoregulatory substance important for seawater adaptation. This Acanthopagrus butcheri (Australian black bream) protein is Somatotropin (gh).